We begin with the raw amino-acid sequence, 59 residues long: UPF0181 protein YoaH (59 aa).

This sequence belongs to the UPF0181 family.

The chain is UPF0181 protein YoaH from Shigella sonnei (strain Ss046).